The chain runs to 101 residues: NADH-quinone oxidoreductase subunit K (101 aa).

Transmembrane regions (helical) follow at residues 4–24 (LAHF…GIFL), 30–50 (IVLL…FVAF), and 61–81 (VFVF…LAIL).

Belongs to the complex I subunit 4L family. As to quaternary structure, NDH-1 is composed of 14 different subunits. Subunits NuoA, H, J, K, L, M, N constitute the membrane sector of the complex.

The protein localises to the cell inner membrane. The enzyme catalyses a quinone + NADH + 5 H(+)(in) = a quinol + NAD(+) + 4 H(+)(out). Its function is as follows. NDH-1 shuttles electrons from NADH, via FMN and iron-sulfur (Fe-S) centers, to quinones in the respiratory chain. The immediate electron acceptor for the enzyme in this species is believed to be ubiquinone. Couples the redox reaction to proton translocation (for every two electrons transferred, four hydrogen ions are translocated across the cytoplasmic membrane), and thus conserves the redox energy in a proton gradient. The chain is NADH-quinone oxidoreductase subunit K from Cupriavidus taiwanensis (strain DSM 17343 / BCRC 17206 / CCUG 44338 / CIP 107171 / LMG 19424 / R1) (Ralstonia taiwanensis (strain LMG 19424)).